Reading from the N-terminus, the 870-residue chain is Alanine--tRNA ligase (870 aa).

Zn(2+) contacts are provided by H585, H589, C689, and H693.

It belongs to the class-II aminoacyl-tRNA synthetase family. Zn(2+) serves as cofactor.

It is found in the cytoplasm. It catalyses the reaction tRNA(Ala) + L-alanine + ATP = L-alanyl-tRNA(Ala) + AMP + diphosphate. In terms of biological role, catalyzes the attachment of alanine to tRNA(Ala) in a two-step reaction: alanine is first activated by ATP to form Ala-AMP and then transferred to the acceptor end of tRNA(Ala). Also edits incorrectly charged Ser-tRNA(Ala) and Gly-tRNA(Ala) via its editing domain. This Picrophilus torridus (strain ATCC 700027 / DSM 9790 / JCM 10055 / NBRC 100828 / KAW 2/3) protein is Alanine--tRNA ligase.